The following is a 282-amino-acid chain: 4-hydroxy-3-methylbut-2-enyl diphosphate reductase (282 aa).

Cys-12 is a [4Fe-4S] cluster binding site. Residues His-40 and His-72 each contribute to the (2E)-4-hydroxy-3-methylbut-2-enyl diphosphate site. Dimethylallyl diphosphate-binding residues include His-40 and His-72. Isopentenyl diphosphate contacts are provided by His-40 and His-72. Cys-94 provides a ligand contact to [4Fe-4S] cluster. His-122 is a binding site for (2E)-4-hydroxy-3-methylbut-2-enyl diphosphate. Position 122 (His-122) interacts with dimethylallyl diphosphate. Residue His-122 coordinates isopentenyl diphosphate. Catalysis depends on Glu-124, which acts as the Proton donor. Residue Thr-160 coordinates (2E)-4-hydroxy-3-methylbut-2-enyl diphosphate. Residue Cys-188 participates in [4Fe-4S] cluster binding. 3 residues coordinate (2E)-4-hydroxy-3-methylbut-2-enyl diphosphate: Ser-216, Asn-218, and Ser-260. The dimethylallyl diphosphate site is built by Ser-216, Asn-218, and Ser-260. 3 residues coordinate isopentenyl diphosphate: Ser-216, Asn-218, and Ser-260.

Belongs to the IspH family. It depends on [4Fe-4S] cluster as a cofactor.

The enzyme catalyses isopentenyl diphosphate + 2 oxidized [2Fe-2S]-[ferredoxin] + H2O = (2E)-4-hydroxy-3-methylbut-2-enyl diphosphate + 2 reduced [2Fe-2S]-[ferredoxin] + 2 H(+). It catalyses the reaction dimethylallyl diphosphate + 2 oxidized [2Fe-2S]-[ferredoxin] + H2O = (2E)-4-hydroxy-3-methylbut-2-enyl diphosphate + 2 reduced [2Fe-2S]-[ferredoxin] + 2 H(+). It participates in isoprenoid biosynthesis; dimethylallyl diphosphate biosynthesis; dimethylallyl diphosphate from (2E)-4-hydroxy-3-methylbutenyl diphosphate: step 1/1. It functions in the pathway isoprenoid biosynthesis; isopentenyl diphosphate biosynthesis via DXP pathway; isopentenyl diphosphate from 1-deoxy-D-xylulose 5-phosphate: step 6/6. Functionally, catalyzes the conversion of 1-hydroxy-2-methyl-2-(E)-butenyl 4-diphosphate (HMBPP) into a mixture of isopentenyl diphosphate (IPP) and dimethylallyl diphosphate (DMAPP). Acts in the terminal step of the DOXP/MEP pathway for isoprenoid precursor biosynthesis. This Geobacter sulfurreducens (strain ATCC 51573 / DSM 12127 / PCA) protein is 4-hydroxy-3-methylbut-2-enyl diphosphate reductase.